The sequence spans 257 residues: Glutamate racemase (257 aa).

Residues 12–13 and 44–45 each bind substrate; these read DS and YG. Catalysis depends on C75, which acts as the Proton donor/acceptor. A substrate-binding site is contributed by 76–77; the sequence is NT. The active-site Proton donor/acceptor is the C185. Substrate is bound at residue 186–187; it reads TH.

The protein belongs to the aspartate/glutamate racemases family.

The enzyme catalyses L-glutamate = D-glutamate. The protein operates within cell wall biogenesis; peptidoglycan biosynthesis. Functionally, provides the (R)-glutamate required for cell wall biosynthesis. This Clostridium botulinum (strain ATCC 19397 / Type A) protein is Glutamate racemase.